The primary structure comprises 2813 residues: A-kinase anchor protein 13 (2813 aa).

Disordered regions lie at residues 304 to 400 (AQDP…QDSC) and 415 to 439 (LSSC…QESL). A compositionally biased stretch (polar residues) spans 427-439 (TKSSGMPTDQESL). The segment at 494–516 (WKNVLQGGESTKERFENSNIGTA) is important for interaction with PRKAR2A. Disordered regions lie at residues 539 to 585 (AASS…VDQN), 632 to 653 (HQNS…SPIC), and 690 to 726 (SEST…RDTQ). Over residues 561 to 577 (STEKTAETETSRSREES) the composition is skewed to basic and acidic residues. Positions 690 to 702 (SESTTARQPSSQD) are enriched in polar residues. Ser-790 carries the post-translational modification Phosphoserine. 2 disordered regions span residues 805–856 (VPSQ…AAEL) and 939–965 (ENAL…QFHE). Phosphothreonine is present on Thr-815. Residues 835-844 (PDTRPLEDRA) are compositionally biased toward basic and acidic residues. Polar residues-rich tracts occupy residues 847–856 (LSTSSTAAEL) and 939–948 (ENALSSGTLQ). Thr-953 carries the post-translational modification Phosphothreonine. At Ser-983 the chain carries Phosphoserine. Disordered regions lie at residues 1431–1455 (GVLK…DSII) and 1467–1542 (DITG…DSIT). Low complexity predominate over residues 1467–1478 (DITGSSSSTDDT). Polar residues predominate over residues 1488-1497 (GSDVSLSQIL). 5 positions are modified to phosphoserine: Ser-1489, Ser-1507, Ser-1540, Ser-1565, and Ser-1602. Positions 1525–1540 (SEPADPGDVEEEEMDS) are enriched in acidic residues. The important for interaction with MAP2K3 stretch occupies residues 1585 to 1715 (RVLGDVVRRP…HSTFHNTSAN (131 aa)). Residues 1601-1638 (FSLEGLTGGAGVGNKPSSSLEVSSANAEELRHPFSGEE) form a disordered region. Positions 1615–1626 (KPSSSLEVSSAN) are enriched in polar residues. The segment covering 1628–1638 (EELRHPFSGEE) has biased composition (basic and acidic residues). Phosphoserine occurs at positions 1642, 1645, and 1647. N6-methyllysine is present on Lys-1670. The tract at residues 1755–1793 (KMSSSKKSKEKEKEKDKIKEKEKDSKDKEKDKKTVNGHT) is disordered. Residues 1758 to 1790 (SSKKSKEKEKEKDKIKEKEKDSKDKEKDKKTVN) are a coiled coil. Over residues 1761 to 1788 (KSKEKEKEKDKIKEKEKDSKDKEKDKKT) the composition is skewed to basic and acidic residues. The Phorbol-ester/DAG-type zinc finger occupies 1791 to 1838 (GHTFSSIPVVGPISCSQCMKPFTNKDAYTCANCSAFVHKGCRESLASC). 3 positions are modified to phosphoserine: Ser-1876, Ser-1895, and Ser-1929. Residues 1919-2813 (MSNTWKFLSH…VSAEGEEIFC (895 aa)) form an interaction with ESR1 region. The residue at position 1930 (Thr-1930) is a Phosphothreonine. Ser-1932 and Ser-1945 each carry phosphoserine. Residues 1994-2191 (KRQEVIYELM…KDVIGAVDSK (198 aa)) form the DH domain. The PH domain maps to 2231–2333 (KLVRDGSVFL…WIQIIQDTIN (103 aa)). Phosphoserine is present on residues Ser-2345 and Ser-2398. The stretch at 2345 to 2381 (SENEEEKKMLDTRARELKEQLHQKDQKILLLLEEKEM) forms a coiled coil. A disordered region spans residues 2466–2502 (ETFGGFDSHQMNASKGGEKEEGDDGQDLRRTESDSGL). At Thr-2467 the chain carries Phosphothreonine. Ser-2473 carries the phosphoserine modification. The segment covering 2491 to 2502 (QDLRRTESDSGL) has biased composition (basic and acidic residues). Residues Ser-2563 and Ser-2566 each carry the phosphoserine modification. Positions 2568 to 2683 (LIEQEKQRSL…RLSQRQTERD (116 aa)) form a coiled coil. The segment covering 2665-2684 (QEQLRREAERLSQRQTERDL) has biased composition (basic and acidic residues). The disordered stretch occupies residues 2665–2813 (QEQLRREAER…VSAEGEEIFC (149 aa)). A phosphoserine mark is found at Ser-2703, Ser-2709, and Ser-2728. A compositionally biased stretch (polar residues) spans 2720–2735 (SLDSELSVSPKRNSIS). Residues 2760-2771 (QSQAPASTSAST) show a composition bias toward low complexity.

Interacts with the cAMP-dependent protein kinase (PKA) holoenzyme and with the regulatory subunit PRKAR2A. Interacts with RHOA. Also interacts with RHOB and RHOC. Identified in a ternary complex with RHOA and PRKAR2A. Identified in a complex with NR3C1 and RHOA. Interacts with BRAF and KSR1. Identified in a complex with BRAF and KSR1. Component of a signaling complex containing at least AKAP13, PKN1, MAPK14, ZAK and MAP2K3. Within this complex, AKAP13 interacts directly with PKN1, which in turn recruits MAPK14, MAP2K3 and ZAK. Interacts (phosphorylated form) with YWHAB and YWHAZ. Interaction with YWHAB inhibits activation of RHOA, interferes with PKN1 binding and activation of MAP kinases. Interacts with GNA12. Interacts with IKBKB. Interacts with ESR1, THRA, PPARA and NME2. Interacts (via the C-terminal domain after the PH domain) with MEF2C and RXRB. Interacts (via the C-terminal domain after the PH domain) with PRKD1. In terms of tissue distribution, detected in mammary gland. Detected in heart (at protein level). Expressed as a 5.3 kb transcript in hematopoietic cells, skeletal muscle, lung, heart, estrogen-responsive reproductive tissues, including breast ductal epithelium. Also found in testis and breast cancer cell lines. Predominantly expressed as a 10 kb transcript in the heart and at lower levels in the lung, placenta, kidney, pancreas, skeletal muscle and liver. Transcripts of between 6-9 kb are also expressed in myeloid and lymphoid lineages, a variety of epithelial tissues, and in skeletal muscle.

Its subcellular location is the cytoplasm. The protein resides in the cytosol. The protein localises to the cell cortex. It localises to the nucleus. It is found in the membrane. Functionally, scaffold protein that plays an important role in assembling signaling complexes downstream of several types of G protein-coupled receptors. Activates RHOA in response to signaling via G protein-coupled receptors via its function as Rho guanine nucleotide exchange factor. May also activate other Rho family members. Part of a kinase signaling complex that links ADRA1A and ADRA1B adrenergic receptor signaling to the activation of downstream p38 MAP kinases, such as MAPK11 and MAPK14. Part of a signaling complex that links ADRA1B signaling to the activation of RHOA and IKBKB/IKKB, leading to increased NF-kappa-B transcriptional activity. Part of a RHOA-dependent signaling cascade that mediates responses to lysophosphatidic acid (LPA), a signaling molecule that activates G-protein coupled receptors and potentiates transcriptional activation of the glucocorticoid receptor NR3C1. Part of a signaling cascade that stimulates MEF2C-dependent gene expression in response to lysophosphatidic acid (LPA). Part of a signaling pathway that activates MAPK11 and/or MAPK14 and leads to increased transcription activation of the estrogen receptors ESR1 and ESR2. Part of a signaling cascade that links cAMP and EGFR signaling to BRAF signaling and to PKA-mediated phosphorylation of KSR1, leading to the activation of downstream MAP kinases, such as MAPK1 or MAPK3. Functions as a scaffold protein that anchors cAMP-dependent protein kinase (PKA) and PRKD1. This promotes activation of PRKD1, leading to increased phosphorylation of HDAC5 and ultimately cardiomyocyte hypertrophy. Has no guanine nucleotide exchange activity on CDC42, Ras or Rac. Required for normal embryonic heart development, and in particular for normal sarcomere formation in the developing cardiomyocytes. Plays a role in cardiomyocyte growth and cardiac hypertrophy in response to activation of the beta-adrenergic receptor by phenylephrine or isoproterenol. Required for normal adaptive cardiac hypertrophy in response to pressure overload. Plays a role in osteogenesis. This is A-kinase anchor protein 13 (AKAP13) from Homo sapiens (Human).